A 671-amino-acid chain; its full sequence is Probable potassium transport system protein Kup 2 (671 aa).

12 helical membrane passes run 18–38 (GFLIALGIVYGDIGTSPLYAM), 60–80 (VSLVIWTLTLITTVKYVLIAL), 103–123 (WLIVPAMIGGATLLADGALTP), 149–169 (VTTLIILAFLFLIQRFGASLV), 173–193 (FGPIMFIWFGFLGVSGLINSF), 218–238 (AGFFILGSIFLVTTGAEALYS), 252–272 (WPFVKICIILSYCGQGAWLLA), 292–312 (MVIYVVILSTLAAIIASQALI), 343–363 (LYIPAVNFALWVTTSFFVLYF), 373–393 (YSLAITITMLMTTTLLTYFLI), 402–422 (IAFISIGLFCIEGSFFAASLV), and 424–444 (FINGAYIVVLIALAIIFVMFI).

This sequence belongs to the HAK/KUP transporter (TC 2.A.72) family.

It is found in the cell membrane. The catalysed reaction is K(+)(in) + H(+)(in) = K(+)(out) + H(+)(out). Its function is as follows. Transport of potassium into the cell. Likely operates as a K(+):H(+) symporter. This chain is Probable potassium transport system protein Kup 2, found in Lactococcus lactis subsp. cremoris (strain SK11).